We begin with the raw amino-acid sequence, 324 residues long: Quinolinate synthase (324 aa).

Iminosuccinate-binding residues include H39 and S56. C101 provides a ligand contact to [4Fe-4S] cluster. Iminosuccinate contacts are provided by residues 127 to 129 and S144; that span reads YIN. Position 187 (C187) interacts with [4Fe-4S] cluster. Residues 213-215 and T230 each bind iminosuccinate; that span reads HPE. [4Fe-4S] cluster is bound at residue C280.

The protein belongs to the quinolinate synthase family. Type 2 subfamily. [4Fe-4S] cluster is required as a cofactor.

Its subcellular location is the cytoplasm. It catalyses the reaction iminosuccinate + dihydroxyacetone phosphate = quinolinate + phosphate + 2 H2O + H(+). The protein operates within cofactor biosynthesis; NAD(+) biosynthesis; quinolinate from iminoaspartate: step 1/1. Functionally, catalyzes the condensation of iminoaspartate with dihydroxyacetone phosphate to form quinolinate. The protein is Quinolinate synthase of Trichormus variabilis (strain ATCC 29413 / PCC 7937) (Anabaena variabilis).